The primary structure comprises 688 residues: Amino-acid acetyltransferase, mitochondrial (688 aa).

The transit peptide at 1–45 (MSSRALTWPRTAKSSLLKQQTSSFVGQPKLGTPNCRSFSSTADRP) directs the protein to the mitochondrion. 2 disordered regions span residues 1 to 59 (MSSR…SKSY) and 96 to 119 (LKAQHPPKAQTEPTTGHSKGTVTQ). Composition is skewed to polar residues over residues 12–25 (AKSSLLKQQTSSFV), 34–57 (NCRSFSSTADRPINQSAEFSSSSK), and 106–119 (TEPTTGHSKGTVTQ). Residues 509-678 (NRPRLSLDDP…YEQVCRSIQP (170 aa)) enclose the N-acetyltransferase domain.

This sequence belongs to the acetyltransferase family.

The protein resides in the mitochondrion. The catalysed reaction is L-glutamate + acetyl-CoA = N-acetyl-L-glutamate + CoA + H(+). The protein operates within amino-acid biosynthesis; L-arginine biosynthesis; N(2)-acetyl-L-ornithine from L-glutamate: step 1/4. Its function is as follows. N-acetylglutamate synthase involved in arginine biosynthesis. The chain is Amino-acid acetyltransferase, mitochondrial (arg2) from Aspergillus flavus (strain ATCC 200026 / FGSC A1120 / IAM 13836 / NRRL 3357 / JCM 12722 / SRRC 167).